Here is a 328-residue protein sequence, read N- to C-terminus: Cytochrome c biogenesis protein CcsA (328 aa).

The next 8 membrane-spanning stretches (helical) occupy residues 13 to 33, 46 to 66, 73 to 93, 101 to 121, 146 to 166, 234 to 254, 263 to 283, and 295 to 315; these read ISFS…LVNL, GIVI…IYSG, LYES…VSYF, LNAI…SGLL, MVLG…LLVI, IISL…VWAN, WDPK…YLHI, and AIVA…VNLL.

It belongs to the CcmF/CycK/Ccl1/NrfE/CcsA family. May interact with Ccs1.

It localises to the plastid. The protein resides in the chloroplast thylakoid membrane. In terms of biological role, required during biogenesis of c-type cytochromes (cytochrome c6 and cytochrome f) at the step of heme attachment. This is Cytochrome c biogenesis protein CcsA from Aethionema cordifolium (Lebanon stonecress).